A 362-amino-acid chain; its full sequence is 2-aminoethylphosphonate--pyruvate transaminase (362 aa).

At K193 the chain carries N6-(pyridoxal phosphate)lysine.

This sequence belongs to the class-V pyridoxal-phosphate-dependent aminotransferase family. PhnW subfamily. Homodimer. Requires pyridoxal 5'-phosphate as cofactor.

The enzyme catalyses (2-aminoethyl)phosphonate + pyruvate = phosphonoacetaldehyde + L-alanine. Involved in phosphonate degradation. This Bacteroides fragilis (strain YCH46) protein is 2-aminoethylphosphonate--pyruvate transaminase.